Reading from the N-terminus, the 541-residue chain is Transmembrane protein 87A (541 aa).

Positions 1-26 (MAAASFQPLKCLLLWVFFVITPPVKA) are cleaved as a signal peptide. The Lumenal portion of the chain corresponds to 27 to 209 (VPEPGIWTVP…HGFISASDWP (183 aa)). N-linked (GlcNAc...) asparagine glycans are attached at residues Asn52, Asn109, Asn148, and Asn189. Intrachain disulfides connect Cys65-Cys116 and Cys82-Cys416. A helical membrane pass occupies residues 210 to 230 (LMIFYMVMCIMYILLALLWFI). The Cytoplasmic portion of the chain corresponds to 231–241 (WSACYWKDLLR). The chain crosses the membrane as a helical span at residues 242 to 262 (IQFWIAAVIFLGMLEKAVYYA). The Lumenal portion of the chain corresponds to 263–293 (EYQNTDNTGVSSHGLLIFAELISSIKRTLAR). A helical membrane pass occupies residues 294–314 (LLVTIVSLGYGIIKPRLGAVM). Over 315-316 (HR) the chain is Cytoplasmic. A helical membrane pass occupies residues 317 to 337 (VVGMGVLYFVFAAVEGVMRII). Residues 338 to 344 (GAKEYDL) are Lumenal-facing. The chain crosses the membrane as a helical span at residues 345–365 (VLLAGIPLALLDSGLCWWIFV). Residues 366 to 384 (SLAQTMKTLKLRKNTVKYS) lie on the Cytoplasmic side of the membrane. Residues 385–405 (LYRHFTNTLIFAILASIIFMI) form a helical membrane-spanning segment. The Lumenal segment spans residues 406-422 (WRTKKFQLVDCQADWME). Residues 423-443 (LWVDDAYWRFLFFIILLVIMF) traverse the membrane as a helical segment. Residues 444-541 (LWRPSANNQR…MTKYEMSKIE (98 aa)) are Cytoplasmic-facing.

It belongs to the LU7TM family. TMEM87 subfamily.

The protein localises to the cell membrane. Its subcellular location is the golgi apparatus membrane. In terms of biological role, potential monoatomic ion channel gated by mechanical force, implicated in normal touch sensitivity through the generation of mechanically activated currents. However, a direct channel activity is debated and an alternative could be that it functions as a chaperone for an unidentified mechanosensitive ion channel. Could also be involved in cell mechanosensitivity regulating cell adhesion and migration. May also be involved in retrograde transport from endosomes to the trans-Golgi network (TGN). This is Transmembrane protein 87A from Xenopus tropicalis (Western clawed frog).